The following is a 364-amino-acid chain: Uroporphyrinogen decarboxylase (364 aa).

Residues 28–32 (RQAGR), Phe47, Asp78, Tyr158, Thr213, and His334 contribute to the substrate site.

Belongs to the uroporphyrinogen decarboxylase family. Homodimer.

The protein resides in the cytoplasm. It carries out the reaction uroporphyrinogen III + 4 H(+) = coproporphyrinogen III + 4 CO2. The protein operates within porphyrin-containing compound metabolism; protoporphyrin-IX biosynthesis; coproporphyrinogen-III from 5-aminolevulinate: step 4/4. Its function is as follows. Catalyzes the decarboxylation of four acetate groups of uroporphyrinogen-III to yield coproporphyrinogen-III. The sequence is that of Uroporphyrinogen decarboxylase from Ralstonia nicotianae (strain ATCC BAA-1114 / GMI1000) (Ralstonia solanacearum).